The primary structure comprises 250 residues: Small ribosomal subunit protein uS2 (250 aa).

This sequence belongs to the universal ribosomal protein uS2 family.

This is Small ribosomal subunit protein uS2 from Paraburkholderia phytofirmans (strain DSM 17436 / LMG 22146 / PsJN) (Burkholderia phytofirmans).